The chain runs to 283 residues: ATP phosphoribosyltransferase (283 aa).

Belongs to the ATP phosphoribosyltransferase family. Long subfamily. Requires Mg(2+) as cofactor.

The protein localises to the cytoplasm. It catalyses the reaction 1-(5-phospho-beta-D-ribosyl)-ATP + diphosphate = 5-phospho-alpha-D-ribose 1-diphosphate + ATP. Its pathway is amino-acid biosynthesis; L-histidine biosynthesis; L-histidine from 5-phospho-alpha-D-ribose 1-diphosphate: step 1/9. Its activity is regulated as follows. Feedback inhibited by histidine. In terms of biological role, catalyzes the condensation of ATP and 5-phosphoribose 1-diphosphate to form N'-(5'-phosphoribosyl)-ATP (PR-ATP). Has a crucial role in the pathway because the rate of histidine biosynthesis seems to be controlled primarily by regulation of HisG enzymatic activity. This is ATP phosphoribosyltransferase from Bacteroides thetaiotaomicron (strain ATCC 29148 / DSM 2079 / JCM 5827 / CCUG 10774 / NCTC 10582 / VPI-5482 / E50).